An 874-amino-acid polypeptide reads, in one-letter code: Valine--tRNA ligase (874 aa).

Positions 42–52 match the 'HIGH' region motif; sequence PNITGRIHIGH. The 'KMSKS' region signature appears at 522 to 526; sequence KMSKS. Position 525 (K525) interacts with ATP. The stretch at 806-874 forms a coiled coil; that stretch reads DYIDIDTEKQ…KLQALLKEIS (69 aa).

The protein belongs to the class-I aminoacyl-tRNA synthetase family. ValS type 1 subfamily. Monomer.

Its subcellular location is the cytoplasm. The catalysed reaction is tRNA(Val) + L-valine + ATP = L-valyl-tRNA(Val) + AMP + diphosphate. Catalyzes the attachment of valine to tRNA(Val). As ValRS can inadvertently accommodate and process structurally similar amino acids such as threonine, to avoid such errors, it has a 'posttransfer' editing activity that hydrolyzes mischarged Thr-tRNA(Val) in a tRNA-dependent manner. The sequence is that of Valine--tRNA ligase from Petrotoga mobilis (strain DSM 10674 / SJ95).